The chain runs to 677 residues: Beta-galactosidase (677 aa).

The first 23 residues, 1-23 (MPGFLVRILPLLLALLLLGPTRG), serve as a signal peptide directing secretion. Residues 24-28 (LRNAT) constitute a propeptide that is removed on maturation. Asn26 is a glycosylation site (N-linked (GlcNAc...) asparagine). Substrate is bound by residues Tyr83, Glu129, and Asn187. Glu188 (proton donor) is an active-site residue. Cysteines 195 and 230 form a disulfide. Asn247 is a glycosylation site (N-linked (GlcNAc...) asparagine). Catalysis depends on Glu268, which acts as the Nucleophile. Residue Tyr333 participates in substrate binding. 4 N-linked (GlcNAc...) asparagine glycosylation sites follow: Asn464, Asn498, Asn545, and Asn555. Cys626 and Cys634 form a disulfide bridge. Residues 654–677 (SKPVEKKLMPSPPQKNKDSWLDHV) are disordered. The segment covering 668-677 (KNKDSWLDHV) has biased composition (basic and acidic residues).

The protein belongs to the glycosyl hydrolase 35 family. As to quaternary structure, homodimer. May form higher multimers.

It is found in the lysosome. The catalysed reaction is Hydrolysis of terminal non-reducing beta-D-galactose residues in beta-D-galactosides.. Its function is as follows. Cleaves beta-linked terminal galactosyl residues from gangliosides, glycoproteins, and glycosaminoglycans. This Pongo abelii (Sumatran orangutan) protein is Beta-galactosidase (GLB1).